A 227-amino-acid chain; its full sequence is Uracil-DNA glycosylase (227 aa).

The active-site Proton acceptor is Asp65.

It belongs to the uracil-DNA glycosylase (UDG) superfamily. UNG family.

It localises to the cytoplasm. It catalyses the reaction Hydrolyzes single-stranded DNA or mismatched double-stranded DNA and polynucleotides, releasing free uracil.. Excises uracil residues from the DNA which can arise as a result of misincorporation of dUMP residues by DNA polymerase or due to deamination of cytosine. The sequence is that of Uracil-DNA glycosylase from Bacillus velezensis (strain DSM 23117 / BGSC 10A6 / LMG 26770 / FZB42) (Bacillus amyloliquefaciens subsp. plantarum).